The sequence spans 129 residues: Glycine cleavage system H protein (129 aa).

The Lipoyl-binding domain maps to 24-106; sequence SYTVGITEHA…FGDGWFFRVM (83 aa). Position 65 is an N6-lipoyllysine (lysine 65).

The protein belongs to the GcvH family. In terms of assembly, the glycine cleavage system is composed of four proteins: P, T, L and H. Requires (R)-lipoate as cofactor.

Its function is as follows. The glycine cleavage system catalyzes the degradation of glycine. The H protein shuttles the methylamine group of glycine from the P protein to the T protein. This chain is Glycine cleavage system H protein, found in Shewanella frigidimarina (strain NCIMB 400).